Consider the following 140-residue polypeptide: Large ribosomal subunit protein uL16c (140 aa).

This sequence belongs to the universal ribosomal protein uL16 family. In terms of assembly, part of the 50S ribosomal subunit.

It is found in the plastid. The protein localises to the chloroplast. This chain is Large ribosomal subunit protein uL16c, found in Psilotum nudum (Whisk fern).